Here is a 279-residue protein sequence, read N- to C-terminus: UPF0276 protein SO_2008 (279 aa).

The protein belongs to the UPF0276 family.

This is UPF0276 protein SO_2008 from Shewanella oneidensis (strain ATCC 700550 / JCM 31522 / CIP 106686 / LMG 19005 / NCIMB 14063 / MR-1).